Consider the following 320-residue polypeptide: 3-O-acetylpapaveroxine carboxylesterase CXE1 (320 aa).

Positions 72 to 74 (HGG) match the Involved in the stabilization of the negatively charged intermediate by the formation of the oxyanion hole motif. Residues serine 158, aspartate 262, and histidine 292 contribute to the active site.

It belongs to the 'GDXG' lipolytic enzyme family.

The catalysed reaction is 3-O-acetylpapaveroxine + H2O = narcotine hemiacetal + acetate + H(+). It functions in the pathway alkaloid biosynthesis. Its function is as follows. Carboxylesterase involved in the biosynthesis of the benzylisoquinoline alkaloid noscapine. Converts 3-O-acetylpapaveroxine to papaveroxine which spontaneously rearranges to narcotine hemiacetal. The chain is 3-O-acetylpapaveroxine carboxylesterase CXE1 from Papaver somniferum (Opium poppy).